The chain runs to 212 residues: Uracil phosphoribosyltransferase (212 aa).

5-phospho-alpha-D-ribose 1-diphosphate contacts are provided by residues arginine 78, arginine 103, and aspartate 130 to serine 138. Residues isoleucine 193 and glycine 198 to alanine 200 each bind uracil. Aspartate 199 contacts 5-phospho-alpha-D-ribose 1-diphosphate.

It belongs to the UPRTase family. Requires Mg(2+) as cofactor.

The catalysed reaction is UMP + diphosphate = 5-phospho-alpha-D-ribose 1-diphosphate + uracil. It functions in the pathway pyrimidine metabolism; UMP biosynthesis via salvage pathway; UMP from uracil: step 1/1. With respect to regulation, allosterically activated by GTP. In terms of biological role, catalyzes the conversion of uracil and 5-phospho-alpha-D-ribose 1-diphosphate (PRPP) to UMP and diphosphate. The sequence is that of Uracil phosphoribosyltransferase from Bordetella avium (strain 197N).